The following is a 330-amino-acid chain: Putative 4-hydroxythreonine-4-phosphate dehydrogenase (330 aa).

A divalent metal cation-binding residues include His169, His213, and His263.

It belongs to the PdxA family. In terms of assembly, homodimer. Zn(2+) serves as cofactor. The cofactor is Mg(2+). Requires Co(2+) as cofactor.

The protein resides in the cytoplasm. The catalysed reaction is 4-(phosphooxy)-L-threonine + NAD(+) = 3-amino-2-oxopropyl phosphate + CO2 + NADH. Its pathway is cofactor biosynthesis; pyridoxine 5'-phosphate biosynthesis; pyridoxine 5'-phosphate from D-erythrose 4-phosphate: step 4/5. Its function is as follows. Catalyzes the NAD(P)-dependent oxidation of 4-(phosphooxy)-L-threonine (HTP) into 2-amino-3-oxo-4-(phosphooxy)butyric acid which spontaneously decarboxylates to form 3-amino-2-oxopropyl phosphate (AHAP). This Novosphingobium aromaticivorans (Sphingomonas aromaticivorans) protein is Putative 4-hydroxythreonine-4-phosphate dehydrogenase.